The chain runs to 183 residues: MRKIVVAAIAVSLTTVSITASASADPSKDSKAQVSAAEAGITGTWYNQLGSTFIVTAGADGALTGTYESAVGNAESRYVLTGRYDSAPATDGSGTALGWTVAWKNNYRNAHSATTWSGQYVGGTEARINTQWLLTSGTTEANAWKSTLVGHDTFTKVKPSAASIDAAKKAGVNNGNPLDAVQQ.

An N-terminal signal peptide occupies residues 1–24; it reads MRKIVVAAIAVSLTTVSITASASA. Residues 37–159 form the Avidin-like domain; sequence AEAGITGTWY…GHDTFTKVKP (123 aa). Residues tyrosine 67 and tyrosine 78 each contribute to the biotin site. The short motif at 83–85 is the Cell attachment site; atypical element; it reads RYD. Tryptophan 116, tryptophan 132, and tryptophan 144 together coordinate biotin.

This sequence belongs to the avidin/streptavidin family. In terms of assembly, homotetramer.

Its subcellular location is the secreted. The biological function of streptavidin is not known. Forms a strong non-covalent specific complex with biotin (one molecule of biotin per subunit of streptavidin). The polypeptide is Streptavidin-V1 (Streptomyces violaceus (Streptomyces venezuelae)).